Reading from the N-terminus, the 193-residue chain is MTDYLLLFVGTILVNNFVLVKFLGLCPFMGVSKKLETAMGMGLATTFVMTLASICAWLIDTWILIPLNLIYLRTLAFILVIAVVVQFTEMVVRKTSPVLYRLLGIFLPLITTNCAVLGVALLNINLGHNFLQSALYGFSAAVGFSLVMVLFTAIRERLAVADVPAPFRGNAIALITAGLMSLAFMGFSGLVKL.

6 helical membrane passes run 5 to 25 (LLLF…FLGL), 39 to 59 (MGMG…AWLI), 63 to 83 (ILIP…VIAV), 102 to 122 (LLGI…VALL), 134 to 154 (ALYG…FTAI), and 171 to 191 (AIAL…SGLV).

The protein belongs to the NqrDE/RnfAE family. In terms of assembly, the complex is composed of six subunits: RsxA, RsxB, RsxC, RsxD, RsxE and RsxG.

It localises to the cell inner membrane. Functionally, part of a membrane-bound complex that couples electron transfer with translocation of ions across the membrane. Required to maintain the reduced state of SoxR. The chain is Ion-translocating oxidoreductase complex subunit A from Shigella boydii serotype 4 (strain Sb227).